The primary structure comprises 807 residues: Glycerol-3-phosphate acyltransferase (807 aa).

Positions 308–313 match the HXXXXD motif motif; that stretch reads CHRSHM.

The protein belongs to the GPAT/DAPAT family.

The protein resides in the cell inner membrane. The catalysed reaction is sn-glycerol 3-phosphate + an acyl-CoA = a 1-acyl-sn-glycero-3-phosphate + CoA. It functions in the pathway phospholipid metabolism; CDP-diacylglycerol biosynthesis; CDP-diacylglycerol from sn-glycerol 3-phosphate: step 1/3. The polypeptide is Glycerol-3-phosphate acyltransferase (Shewanella sp. (strain MR-7)).